Consider the following 342-residue polypeptide: S-adenosylmethionine:tRNA ribosyltransferase-isomerase (342 aa).

It belongs to the QueA family. Monomer.

It is found in the cytoplasm. The enzyme catalyses 7-aminomethyl-7-carbaguanosine(34) in tRNA + S-adenosyl-L-methionine = epoxyqueuosine(34) in tRNA + adenine + L-methionine + 2 H(+). The protein operates within tRNA modification; tRNA-queuosine biosynthesis. Its function is as follows. Transfers and isomerizes the ribose moiety from AdoMet to the 7-aminomethyl group of 7-deazaguanine (preQ1-tRNA) to give epoxyqueuosine (oQ-tRNA). The chain is S-adenosylmethionine:tRNA ribosyltransferase-isomerase from Listeria monocytogenes serotype 4b (strain CLIP80459).